The primary structure comprises 268 residues: Cytolethal distending toxin subunit A (268 aa).

An N-terminal signal peptide occupies residues 1 to 19 (MQKIIVFILCCFMTFFLYA). Cys20 carries the N-palmitoyl cysteine lipid modification. Cys20 is lipidated: S-diacylglycerol cysteine. One can recognise a Ricin B-type lectin domain in the interval 112–252 (VSDFLTILGP…DNFDQQWFLT (141 aa)). Residues 129-140 (WALAQGNWIWGY) form a mediates binding to target cells region.

In terms of assembly, heterotrimer of 3 subunits, CdtA, CdtB and CdtC.

It localises to the cell outer membrane. Functionally, CDTs are cytotoxins which induce cell distension, growth arrest in G2/M phase, nucleus swelling, and chromatin fragmentation in HeLa cells. The chain is Cytolethal distending toxin subunit A (cdtA) from Campylobacter jejuni subsp. jejuni serotype O:2 (strain ATCC 700819 / NCTC 11168).